We begin with the raw amino-acid sequence, 78 residues long: Small ribosomal subunit protein bS18 (78 aa).

The protein belongs to the bacterial ribosomal protein bS18 family. In terms of assembly, part of the 30S ribosomal subunit. Forms a tight heterodimer with protein bS6.

Binds as a heterodimer with protein bS6 to the central domain of the 16S rRNA, where it helps stabilize the platform of the 30S subunit. The polypeptide is Small ribosomal subunit protein bS18 (Levilactobacillus brevis (strain ATCC 367 / BCRC 12310 / CIP 105137 / JCM 1170 / LMG 11437 / NCIMB 947 / NCTC 947) (Lactobacillus brevis)).